The primary structure comprises 163 residues: Endoribonuclease YbeY (163 aa).

The Zn(2+) site is built by histidine 129, histidine 133, and histidine 139.

The protein belongs to the endoribonuclease YbeY family. The cofactor is Zn(2+).

It localises to the cytoplasm. Functionally, single strand-specific metallo-endoribonuclease involved in late-stage 70S ribosome quality control and in maturation of the 3' terminus of the 16S rRNA. The sequence is that of Endoribonuclease YbeY from Picosynechococcus sp. (strain ATCC 27264 / PCC 7002 / PR-6) (Agmenellum quadruplicatum).